The primary structure comprises 340 residues: CaiB/baiF CoA-transferase family protein ZK892.4 (340 aa).

D154 functions as the Nucleophile in the catalytic mechanism.

This sequence belongs to the CoA-transferase III family.

This Caenorhabditis elegans protein is CaiB/baiF CoA-transferase family protein ZK892.4.